Reading from the N-terminus, the 66-residue chain is Large ribosomal subunit protein bL35 (66 aa).

The disordered stretch occupies residues 20 to 40; sequence GKVKHAQRGKRHGMIKRTKKQ.

This sequence belongs to the bacterial ribosomal protein bL35 family.

In Nitrobacter winogradskyi (strain ATCC 25391 / DSM 10237 / CIP 104748 / NCIMB 11846 / Nb-255), this protein is Large ribosomal subunit protein bL35.